Reading from the N-terminus, the 448-residue chain is Protein giant (448 aa).

4 disordered regions span residues 23–47 (MHHHQYQHHQQQPLHHLPHSQLPVQ), 83–134 (QQHQ…ASPT), 238–259 (VEATTPTTSSSGEAGKNTRPFK), and 298–363 (IRSS…TSSS). Residues 30–47 (HHQQQPLHHLPHSQLPVQ) are compositionally biased toward low complexity. The segment covering 100–112 (DLSRRCDSVETPR) has biased composition (basic and acidic residues). Low complexity predominate over residues 115–134 (PSPYQTSYSYGSGSPSASPT). A compositionally biased stretch (polar residues) spans 298–310 (IRSSNGGSRTVTN). The span at 318 to 333 (SRSGSVNEGSSSNNNS) shows a compositional bias: low complexity. The region spanning 384-447 (DAAYYERRRK…AAFTSAKVTT (64 aa)) is the bZIP domain. Residues 390 to 406 (RRRKNNAAAKKSRDRRR) form a basic motif region. The tract at residues 407–414 (IKEDEIAI) is leucine-zipper.

It belongs to the bZIP family. In terms of assembly, homodimer or heterodimer. Post-translationally, phosphorylated at multiple sites.

Its subcellular location is the nucleus. Functionally, represses the expression of both the krueppel and knirps segmentation gap genes. Binds, in vitro, to the krueppel regulatory elements CD1 and CD2. It is required in the early embryo for the development of portions of the head and abdomen. This chain is Protein giant (gt), found in Drosophila melanogaster (Fruit fly).